A 370-amino-acid polypeptide reads, in one-letter code: Phosphoserine aminotransferase (370 aa).

Met-1 is modified (N-acetylmethionine). The O-phospho-L-serine site is built by His-44 and Arg-45. N6-acetyllysine is present on Lys-51. Pyridoxal 5'-phosphate is bound by residues Gly-79 and Trp-107. At Lys-127 the chain carries N6-acetyllysine. Thr-156, Asp-176, and Gln-199 together coordinate pyridoxal 5'-phosphate. Residue Lys-200 is modified to N6-(pyridoxal phosphate)lysine. Pyridoxal 5'-phosphate contacts are provided by Asn-241 and Thr-242. N6-acetyllysine occurs at positions 269, 318, and 323. The residue at position 331 (Ser-331) is a Phosphoserine. The residue at position 333 (Lys-333) is an N6-acetyllysine. Residues His-335, Arg-336, and Arg-342 each contribute to the O-phospho-L-serine site.

It belongs to the class-V pyridoxal-phosphate-dependent aminotransferase family. SerC subfamily. As to quaternary structure, homodimer. It depends on pyridoxal 5'-phosphate as a cofactor.

The catalysed reaction is O-phospho-L-serine + 2-oxoglutarate = 3-phosphooxypyruvate + L-glutamate. It participates in amino-acid biosynthesis; L-serine biosynthesis; L-serine from 3-phospho-D-glycerate: step 2/3. Its function is as follows. Involved in L-serine biosynthesis via the phosphorylated pathway, a three-step pathway converting the glycolytic intermediate 3-phospho-D-glycerate into L-serine. Catalyzes the second step, that is the pyridoxal 5'-phosphate-dependent transamination of 3-phosphohydroxypyruvate and L-glutamate to O-phosphoserine (OPS) and alpha-ketoglutarate. This chain is Phosphoserine aminotransferase, found in Mus musculus (Mouse).